A 214-amino-acid polypeptide reads, in one-letter code: Octanoyltransferase (214 aa).

A BPL/LPL catalytic domain is found at 29 to 214; the sequence is STTPDEIWIL…EHLQKQLMPT (186 aa). Substrate is bound by residues 69–76, 146–148, and 159–161; these read RGGEITYH, ALG, and GLA. Catalysis depends on Cys177, which acts as the Acyl-thioester intermediate.

Belongs to the LipB family.

Its subcellular location is the cytoplasm. The enzyme catalyses octanoyl-[ACP] + L-lysyl-[protein] = N(6)-octanoyl-L-lysyl-[protein] + holo-[ACP] + H(+). It functions in the pathway protein modification; protein lipoylation via endogenous pathway; protein N(6)-(lipoyl)lysine from octanoyl-[acyl-carrier-protein]: step 1/2. Catalyzes the transfer of endogenously produced octanoic acid from octanoyl-acyl-carrier-protein onto the lipoyl domains of lipoate-dependent enzymes. Lipoyl-ACP can also act as a substrate although octanoyl-ACP is likely to be the physiological substrate. This is Octanoyltransferase from Polynucleobacter asymbioticus (strain DSM 18221 / CIP 109841 / QLW-P1DMWA-1) (Polynucleobacter necessarius subsp. asymbioticus).